Here is a 132-residue protein sequence, read N- to C-terminus: Ribonuclease P protein component 2 (132 aa).

The protein belongs to the eukaryotic/archaeal RNase P protein component 2 family. Consists of a catalytic RNA component and at least 4-5 protein subunits.

It localises to the cytoplasm. It carries out the reaction Endonucleolytic cleavage of RNA, removing 5'-extranucleotides from tRNA precursor.. Its function is as follows. Part of ribonuclease P, a protein complex that generates mature tRNA molecules by cleaving their 5'-ends. In Methanosarcina acetivorans (strain ATCC 35395 / DSM 2834 / JCM 12185 / C2A), this protein is Ribonuclease P protein component 2.